The primary structure comprises 604 residues: Putative JmjC domain-containing protein L887 (604 aa).

The 127-residue stretch at 1-127 (MNNMKKIIII…PNNKLNLIQP (127 aa)) folds into the JmjC domain. The chain crosses the membrane as a helical span at residues 4 to 24 (MKKIIIISIIIIIIIVLLFYI).

The protein localises to the membrane. In Acanthamoeba polyphaga (Amoeba), this protein is Putative JmjC domain-containing protein L887.